Reading from the N-terminus, the 84-residue chain is MGVKGQLLQDPFLNILRKERIPVSIYLVNGIKLQGQIDSFDQYVVLLKNSVTQMVYKHAISTIVPAKAISIPIPADTQTEQDEP.

The Sm domain maps to 10 to 69 (DPFLNILRKERIPVSIYLVNGIKLQGQIDSFDQYVVLLKNSVTQMVYKHAISTIVPAKAI).

Belongs to the Hfq family. Homohexamer.

In terms of biological role, RNA chaperone that binds small regulatory RNA (sRNAs) and mRNAs to facilitate mRNA translational regulation in response to envelope stress, environmental stress and changes in metabolite concentrations. Also binds with high specificity to tRNAs. This chain is RNA-binding protein Hfq, found in Nitrosomonas europaea (strain ATCC 19718 / CIP 103999 / KCTC 2705 / NBRC 14298).